We begin with the raw amino-acid sequence, 392 residues long: Glucan endo-1,3-beta-glucosidase 14 (392 aa).

The N-terminal stretch at 1–21 is a signal peptide; it reads MATHSLSFFFRVLLLLFLTLS. N-linked (GlcNAc...) asparagine glycosylation is found at Asn-54 and Asn-89. The active-site Proton donor is the Glu-122. Catalysis depends on Glu-267, which acts as the Nucleophile. A lipid anchor (GPI-anchor amidated serine) is attached at Ser-359. A propeptide spans 360 to 392 (removed in mature form); it reads RATTIKILNLWRVVMGLAVAWFILDMGDKMRMR.

This sequence belongs to the glycosyl hydrolase 17 family.

It localises to the cell membrane. It is found in the secreted. The protein localises to the cell wall. The protein resides in the cytoplasm. The catalysed reaction is Hydrolysis of (1-&gt;3)-beta-D-glucosidic linkages in (1-&gt;3)-beta-D-glucans.. The sequence is that of Glucan endo-1,3-beta-glucosidase 14 from Arabidopsis thaliana (Mouse-ear cress).